The following is a 256-amino-acid chain: Ubiquinone/menaquinone biosynthesis C-methyltransferase UbiE (256 aa).

Over residues 1-19 (MQNRSSSPDSSSAGNTHFG) the composition is skewed to polar residues. Residues 1–24 (MQNRSSSPDSSSAGNTHFGFQSVP) form a disordered region. S-adenosyl-L-methionine contacts are provided by residues threonine 81, aspartate 102, and 128–129 (DA).

Belongs to the class I-like SAM-binding methyltransferase superfamily. MenG/UbiE family.

It catalyses the reaction a 2-demethylmenaquinol + S-adenosyl-L-methionine = a menaquinol + S-adenosyl-L-homocysteine + H(+). The enzyme catalyses a 2-methoxy-6-(all-trans-polyprenyl)benzene-1,4-diol + S-adenosyl-L-methionine = a 5-methoxy-2-methyl-3-(all-trans-polyprenyl)benzene-1,4-diol + S-adenosyl-L-homocysteine + H(+). The protein operates within quinol/quinone metabolism; menaquinone biosynthesis; menaquinol from 1,4-dihydroxy-2-naphthoate: step 2/2. Its pathway is cofactor biosynthesis; ubiquinone biosynthesis. In terms of biological role, methyltransferase required for the conversion of demethylmenaquinol (DMKH2) to menaquinol (MKH2) and the conversion of 2-polyprenyl-6-methoxy-1,4-benzoquinol (DDMQH2) to 2-polyprenyl-3-methyl-6-methoxy-1,4-benzoquinol (DMQH2). In Bordetella avium (strain 197N), this protein is Ubiquinone/menaquinone biosynthesis C-methyltransferase UbiE.